The sequence spans 406 residues: Kelch domain-containing protein 1 (406 aa).

Kelch repeat units lie at residues 24 to 76 (FLYV…CGAC), 80 to 134 (RLYV…VYKD), 135 to 181 (RLIY…TKTR), 208 to 258 (KGYV…AITD), 260 to 307 (KLFL…ACLG), and 311 to 361 (EIMV…LKSQ).

As to quaternary structure, component of a CRL5 E3 ubiquitin-protein ligase complex, also named ECS (Elongin BC-CUL2/5-SOCS-box protein) complex, composed of CUL5, Elongin BC (ELOB and ELOC), RBX1 and substrate-specific adapter KLHDC1.

The protein localises to the cytoplasm. It is found in the cytosol. Its pathway is protein modification; protein ubiquitination. Its function is as follows. Substrate-recognition component of a Cul5-RING (CRL5) E3 ubiquitin-protein ligase complex of the DesCEND (destruction via C-end degrons) pathway, which recognizes a C-degron located at the extreme C terminus of target proteins, leading to their ubiquitination and degradation. The C-degron recognized by the DesCEND pathway is usually a motif of less than ten residues and can be present in full-length proteins, truncated proteins or proteolytically cleaved forms. The CRL5(KLHDC1) complex mediates ubiquitination and degradation of truncated SELENOS selenoprotein produced by failed UGA/Sec decoding, which ends with a glycine. The chain is Kelch domain-containing protein 1 from Mus musculus (Mouse).